The following is a 217-amino-acid chain: Glyoxalase ElbB (217 aa).

The active-site Nucleophile is cysteine 135.

The protein belongs to the peptidase C56 family. In terms of assembly, homodimer.

It catalyses the reaction glyoxal + H2O = glycolate + H(+). Functionally, displays glyoxalase activity, catalyzing the conversion of glyoxal to glycolate. However, this apparent glyoxalase activity may reflect a protein deglycase activity, which could be the primary function of this protein like other DJ-1 superfamily members such as PARK7, YajL, YhbO and HchA. Is not able to use methylglyoxal as substrate. This is Glyoxalase ElbB from Escherichia coli (strain K12).